The primary structure comprises 212 residues: Thymidylate kinase (212 aa).

11 to 18 contacts ATP; it reads GPEGAGKS.

It belongs to the thymidylate kinase family.

The catalysed reaction is dTMP + ATP = dTDP + ADP. Its function is as follows. Phosphorylation of dTMP to form dTDP in both de novo and salvage pathways of dTTP synthesis. The sequence is that of Thymidylate kinase from Streptococcus sanguinis (strain SK36).